A 66-amino-acid chain; its full sequence is Brevinin-1DYb (66 aa).

An N-terminal signal peptide occupies residues 1–22 (MFTLKKSLLLLFFLGTISLSLC). Residues 23 to 44 (EEERNAEEERRDYPEERDVEVE) constitute a propeptide that is removed on maturation. A disulfide bond links cysteine 60 and cysteine 66.

Expressed by the skin glands.

It is found in the secreted. Functionally, antimicrobial peptide. Has low activity against the Gram-positive bacterium S.aureus and the Gram-negative bacterium E.coli (MIC&lt;15 uM). Has a strong hemolytic activity. The sequence is that of Brevinin-1DYb from Rana dybowskii (Dybovsky's frog).